We begin with the raw amino-acid sequence, 210 residues long: Dephospho-CoA kinase (210 aa).

In terms of domain architecture, DPCK spans 4–201 (IVALTGGICS…NFYIYLSKQN (198 aa)). ATP is bound at residue 12–17 (CSGKTT).

This sequence belongs to the CoaE family.

It is found in the cytoplasm. The catalysed reaction is 3'-dephospho-CoA + ATP = ADP + CoA + H(+). The protein operates within cofactor biosynthesis; coenzyme A biosynthesis; CoA from (R)-pantothenate: step 5/5. In terms of biological role, catalyzes the phosphorylation of the 3'-hydroxyl group of dephosphocoenzyme A to form coenzyme A. This chain is Dephospho-CoA kinase, found in Buchnera aphidicola subsp. Schizaphis graminum (strain Sg).